The primary structure comprises 414 residues: Gamma-glutamyl phosphate reductase (414 aa).

It belongs to the gamma-glutamyl phosphate reductase family.

The protein resides in the cytoplasm. The enzyme catalyses L-glutamate 5-semialdehyde + phosphate + NADP(+) = L-glutamyl 5-phosphate + NADPH + H(+). Its pathway is amino-acid biosynthesis; L-proline biosynthesis; L-glutamate 5-semialdehyde from L-glutamate: step 2/2. Its function is as follows. Catalyzes the NADPH-dependent reduction of L-glutamate 5-phosphate into L-glutamate 5-semialdehyde and phosphate. The product spontaneously undergoes cyclization to form 1-pyrroline-5-carboxylate. The chain is Gamma-glutamyl phosphate reductase from Francisella philomiragia subsp. philomiragia (strain ATCC 25017 / CCUG 19701 / FSC 153 / O#319-036).